A 160-amino-acid polypeptide reads, in one-letter code: Large ribosomal subunit protein eL21A (160 aa).

Residues 114–138 (AKRKEAKAQGKTVQLRRQPAPPAKA) are disordered.

Belongs to the eukaryotic ribosomal protein eL21 family. As to quaternary structure, component of the large ribosomal subunit (LSU). Mature yeast ribosomes consist of a small (40S) and a large (60S) subunit. The 40S small subunit contains 1 molecule of ribosomal RNA (18S rRNA) and at least 33 different proteins. The large 60S subunit contains 3 rRNA molecules (25S, 5.8S and 5S rRNA) and at least 46 different proteins.

The protein resides in the cytoplasm. In terms of biological role, component of the ribosome, a large ribonucleoprotein complex responsible for the synthesis of proteins in the cell. The small ribosomal subunit (SSU) binds messenger RNAs (mRNAs) and translates the encoded message by selecting cognate aminoacyl-transfer RNA (tRNA) molecules. The large subunit (LSU) contains the ribosomal catalytic site termed the peptidyl transferase center (PTC), which catalyzes the formation of peptide bonds, thereby polymerizing the amino acids delivered by tRNAs into a polypeptide chain. The nascent polypeptides leave the ribosome through a tunnel in the LSU and interact with protein factors that function in enzymatic processing, targeting, and the membrane insertion of nascent chains at the exit of the ribosomal tunnel. This chain is Large ribosomal subunit protein eL21A (rpl2101), found in Schizosaccharomyces pombe (strain 972 / ATCC 24843) (Fission yeast).